A 523-amino-acid chain; its full sequence is Sorting nexin-2 (523 aa).

The tract at residues 1–104 is disordered; that stretch reads MAAEREPPPL…EPSPAVTPVT (104 aa). Low complexity-rich tracts occupy residues 27 to 50 and 93 to 104; these read LFTSTVSTLESSPSSPEPASLPAE and SSEPSPAVTPVT. The residue at position 97 (Ser97) is a Phosphoserine. Residues Thr101 and Thr104 each carry the phosphothreonine modification. Phosphoserine is present on residues Ser117 and Ser119. The region spanning 140–269 is the PX domain; that stretch reads FDIEIGVSDP…QFLESSELPR (130 aa). Residues Arg183, Ser185, Lys211, and Arg235 each coordinate a 1,2-diacyl-sn-glycero-3-phospho-(1D-myo-inositol-3-phosphate). The residue at position 185 (Ser185) is a Phosphoserine. Positions 260 to 523 are interaction with RhoG; that stretch reads QFLESSELPR…AFLPEAKAIA (264 aa). The residue at position 277 (Ser277) is a Phosphoserine. The membrane-binding amphipathic helix stretch occupies residues 278 to 295; sequence GAGILRMVNKAADAVNKM. The BAR domain occupies 299 to 523; the sequence is MNESDAWFEE…AFLPEAKAIA (225 aa). N6-acetyllysine is present on Lys473.

The protein belongs to the sorting nexin family. In terms of assembly, predominantly forms heterodimers with BAR domain-containing sorting nexins SNX5, SNX6 and SNX32; can self-associate to form homodimers. The heterodimers are proposed to self-assemble into helical arrays on the membrane to stabilize and expand local membrane curvature underlying endosomal tubule formation. Thought to be a component of the originally described retromer complex (also called SNX-BAR retromer) which is a pentamer containing the heterotrimeric retromer cargo-selective complex (CSC), also described as vacuolar protein sorting subcomplex (VPS), and a heterodimeric membrane-deforming subcomplex formed between SNX1 or SNX2 and SNX5 or SNX6 (also called SNX-BAR subcomplex); the respective CSC and SNX-BAR subcomplexes associate with low affinity. Interacts with SNX5, SNX6, SNX32, VPS26A, VPS29, VPS35, FNBP1, KALRN, RHOG (GDP-bound form).

It localises to the early endosome membrane. The protein localises to the cell projection. It is found in the lamellipodium. In terms of biological role, involved in several stages of intracellular trafficking. Interacts with membranes containing phosphatidylinositol 3-phosphate (PtdIns(3P)) or phosphatidylinositol 3,5-bisphosphate (PtdIns(3,5)P2). Acts in part as component of the retromer membrane-deforming SNX-BAR subcomplex. The SNX-BAR retromer mediates retrograde transport of cargo proteins from endosomes to the trans-Golgi network (TGN) and is involved in endosome-to-plasma membrane transport for cargo protein recycling. The SNX-BAR subcomplex functions to deform the donor membrane into a tubular profile called endosome-to-TGN transport carrier (ETC). Can sense membrane curvature and has in vitro vesicle-to-membrane remodeling activity. Required for retrograde endosome-to-TGN transport of TGN38. Promotes KALRN- and RHOG-dependent but retromer-independent membrane remodeling such as lamellipodium formation; the function is dependent on GEF activity of KALRN. This is Sorting nexin-2 (SNX2) from Macaca fascicularis (Crab-eating macaque).